We begin with the raw amino-acid sequence, 236 residues long: Small ribosomal subunit protein uS2c (236 aa).

Belongs to the universal ribosomal protein uS2 family.

Its subcellular location is the plastid. The protein resides in the chloroplast. The chain is Small ribosomal subunit protein uS2c (rps2) from Nandina domestica (Heavenly bamboo).